Here is an 831-residue protein sequence, read N- to C-terminus: Glucan 1,3-beta-glucosidase D (831 aa).

A compositionally biased stretch (basic and acidic residues) spans 1–21 (MPSQSRSRDRYGRDSDRDRSR). Disordered regions lie at residues 1-246 (MPSQ…RGQS) and 261-288 (APDM…SDGS). Residues 1 to 300 (MPSQSRSRDR…LTPFWKRKKW (300 aa)) are Cytoplasmic-facing. Residues 32–41 (EDDDDDDDFD) show a composition bias toward acidic residues. Basic and acidic residues-rich tracts occupy residues 42-70 (DNPR…HDDY), 78-94 (EPRR…ERAR), and 151-177 (DAAR…HKST). The span at 178 to 195 (DSSNSSAGLLNANALAKL) shows a compositional bias: low complexity. Composition is skewed to basic and acidic residues over residues 197–216 (AQHE…EAKA) and 275–286 (PPRERRWEKDSD). Residues 301–321 (WWIGAIVLVIVVIIIVVAVVV) form a helical; Signal-anchor for type II membrane protein membrane-spanning segment. Residues 322-831 (SNNKKSDSDS…PSFGNLPEYY (510 aa)) are Extracellular-facing. The tract at residues 325–360 (KKSDSDSDSDSNSGSSDSWGGDKSSLNGLDHDSIPK) is disordered. Low complexity predominate over residues 334–350 (DSNSGSSDSWGGDKSSL). N-linked (GlcNAc...) asparagine glycosylation is found at Asn-379, Asn-396, and Asn-547. Glu-598 functions as the Proton donor in the catalytic mechanism. Asn-611, Asn-637, Asn-670, and Asn-690 each carry an N-linked (GlcNAc...) asparagine glycan. The active-site Nucleophile is Glu-703.

The protein belongs to the glycosyl hydrolase 5 (cellulase A) family.

It is found in the cell membrane. It carries out the reaction Successive hydrolysis of beta-D-glucose units from the non-reducing ends of (1-&gt;3)-beta-D-glucans, releasing alpha-glucose.. Functionally, glucosidase involved in the degradation of cellulosic biomass. Active on lichenan. In Emericella nidulans (strain FGSC A4 / ATCC 38163 / CBS 112.46 / NRRL 194 / M139) (Aspergillus nidulans), this protein is Glucan 1,3-beta-glucosidase D (exgD).